The chain runs to 22 residues: Antimicrobial peptide 5 (22 aa).

L22 is subject to Leucine amide.

As to expression, skin.

It localises to the secreted. Has very strong antimicrobial activity against Gram-positive bacterium S.aureus, Gram-negative bacterium E.coli and yeast C.albicans. Has strong hemolytic activity against human red blood cells. The chain is Antimicrobial peptide 5 from Xenopus tropicalis (Western clawed frog).